The primary structure comprises 197 residues: 7-methyl-GTP pyrophosphatase (197 aa).

Asp-73 serves as the catalytic Proton acceptor.

The protein belongs to the Maf family. YceF subfamily. Requires a divalent metal cation as cofactor.

The protein resides in the cytoplasm. It carries out the reaction N(7)-methyl-GTP + H2O = N(7)-methyl-GMP + diphosphate + H(+). Functionally, nucleoside triphosphate pyrophosphatase that hydrolyzes 7-methyl-GTP (m(7)GTP). May have a dual role in cell division arrest and in preventing the incorporation of modified nucleotides into cellular nucleic acids. In Alcanivorax borkumensis (strain ATCC 700651 / DSM 11573 / NCIMB 13689 / SK2), this protein is 7-methyl-GTP pyrophosphatase.